We begin with the raw amino-acid sequence, 157 residues long: Deoxyuridine 5'-triphosphate nucleotidohydrolase (157 aa).

Substrate contacts are provided by residues 73–75, Asn-86, and 90–92; these read RSG and TID.

This sequence belongs to the dUTPase family. Mg(2+) is required as a cofactor.

It catalyses the reaction dUTP + H2O = dUMP + diphosphate + H(+). It participates in pyrimidine metabolism; dUMP biosynthesis; dUMP from dCTP (dUTP route): step 2/2. Its function is as follows. This enzyme is involved in nucleotide metabolism: it produces dUMP, the immediate precursor of thymidine nucleotides and it decreases the intracellular concentration of dUTP so that uracil cannot be incorporated into DNA. In Azorhizobium caulinodans (strain ATCC 43989 / DSM 5975 / JCM 20966 / LMG 6465 / NBRC 14845 / NCIMB 13405 / ORS 571), this protein is Deoxyuridine 5'-triphosphate nucleotidohydrolase.